A 129-amino-acid chain; its full sequence is MGAQGVTVRDLGSRVCSVRRAHGNRPGLNDKRSCAPTLFIHPLTATERNTQMTTPNAMPRKANPLHQQVLGALIKTRPTVWTHKAIDPESPDPKKPRVIETKVHGREVTGLARNVSEENVDRLAKRWIK.

In Mycobacterium (Mycobacteriophage D29), this protein is Gene 63 protein (63).